The chain runs to 196 residues: Protease (196 aa).

Active-site residues include histidine 54, aspartate 70, and cysteine 121.

Belongs to the peptidase C5 family. Interacts with protease cofactor pVI-C; this interaction is necessary for protease activation.

The protein resides in the virion. It localises to the host nucleus. The catalysed reaction is Cleaves proteins of the adenovirus and its host cell at two consensus sites: -Yaa-Xaa-Gly-Gly-|-Xaa- and -Yaa-Xaa-Gly-Xaa-|-Gly- (in which Yaa is Met, Ile or Leu, and Xaa is any amino acid).. Requires DNA and protease cofactor for maximal activation. Inside nascent virions, becomes partially activated by binding to the viral DNA, allowing it to cleave the cofactor that binds to the protease and fully activates it. Actin, like the viral protease cofactor, seems to act as a cofactor in the cleavage of cytokeratin 18 and of actin itself. In terms of biological role, cleaves viral precursor proteins (pTP, pIIIa, pVI, pVII, pVIII, and pX) inside newly assembled particles giving rise to mature virions. Protease complexed to its cofactor slides along the viral DNA to specifically locate and cleave the viral precursors. Mature virions have a weakened organization compared to the unmature virions, thereby facilitating subsequent uncoating. Without maturation, the particle lacks infectivity and is unable to uncoat. Late in adenovirus infection, in the cytoplasm, may participate in the cytoskeleton destruction. Cleaves host cell cytoskeletal keratins K7 and K18. This is Protease from Bos taurus (Bovine).